The primary structure comprises 403 residues: Flavohemoprotein (403 aa).

Positions 1-138 (MLTQKTKDIV…LADVLMGMES (138 aa)) constitute a Globin domain. Position 85 (histidine 85) interacts with heme b. Residues tyrosine 95 and glutamate 137 each act as charge relay system in the active site. The interval 149–403 (GGWKGWRTFV…EVFGPDLFAE (255 aa)) is reductase. The 111-residue stretch at 152-262 (KGWRTFVIRE…AAPYGSFHID (111 aa)) folds into the FAD-binding FR-type domain. Residues tyrosine 190 and 206 to 209 (RQYS) contribute to the FAD site. 275-280 (GVGLTP) contributes to the NADP(+) binding site. 395 to 398 (VFGP) contributes to the FAD binding site.

The protein belongs to the globin family. Two-domain flavohemoproteins subfamily. This sequence in the C-terminal section; belongs to the flavoprotein pyridine nucleotide cytochrome reductase family. As to quaternary structure, monomer. FAD serves as cofactor. Requires heme b as cofactor.

It localises to the cytoplasm. The enzyme catalyses 2 nitric oxide + NADPH + 2 O2 = 2 nitrate + NADP(+) + H(+). It carries out the reaction 2 nitric oxide + NADH + 2 O2 = 2 nitrate + NAD(+) + H(+). Functionally, is involved in NO detoxification in an aerobic process, termed nitric oxide dioxygenase (NOD) reaction that utilizes O(2) and NAD(P)H to convert NO to nitrate, which protects the bacterium from various noxious nitrogen compounds. Therefore, plays a central role in the inducible response to nitrosative stress. Its function is as follows. In the presence of oxygen and NADH, FHP has NADH oxidase activity, which leads to the generation of superoxide and H(2)O(2), both in vitro and in vivo, and it has been suggested that FHP might act as an amplifier of superoxide stress. Under anaerobic conditions, FHP also exhibits nitric oxide reductase and FAD reductase activities. However, all these reactions are much lower than NOD activity. The chain is Flavohemoprotein (hmp) from Cupriavidus necator (strain ATCC 17699 / DSM 428 / KCTC 22496 / NCIMB 10442 / H16 / Stanier 337) (Ralstonia eutropha).